Here is a 298-residue protein sequence, read N- to C-terminus: tRNA uridine(34) hydroxylase (298 aa).

Residues 123–217 form the Rhodanese domain; sequence QNPDVTLVDT…YLEEIPVAES (95 aa). C177 functions as the Cysteine persulfide intermediate in the catalytic mechanism.

It belongs to the TrhO family.

It catalyses the reaction uridine(34) in tRNA + AH2 + O2 = 5-hydroxyuridine(34) in tRNA + A + H2O. Catalyzes oxygen-dependent 5-hydroxyuridine (ho5U) modification at position 34 in tRNAs. The sequence is that of tRNA uridine(34) hydroxylase from Picosynechococcus sp. (strain ATCC 27264 / PCC 7002 / PR-6) (Agmenellum quadruplicatum).